Consider the following 1279-residue polypeptide: Cellulose synthase operon protein C (1279 aa).

An N-terminal signal peptide occupies residues methionine 1–alanine 21. TPR repeat units follow at residues glutamine 27–glutamine 60, aspartate 62–proline 94, alanine 218–aspartate 250, valine 306–alanine 339, proline 384–aspartate 417, alanine 460–asparagine 493, tryptophan 495–glutamine 527, proline 606–proline 639, alanine 719–asparagine 752, and proline 787–methionine 820.

The protein operates within glycan metabolism; bacterial cellulose biosynthesis. Its function is as follows. Required for maximal bacterial cellulose synthesis. The protein is Cellulose synthase operon protein C (bscS) of Pseudomonas fluorescens (strain SBW25).